A 343-amino-acid chain; its full sequence is tRNA N6-adenosine threonylcarbamoyltransferase (343 aa).

2 residues coordinate Fe cation: His-116 and His-120. Substrate is bound by residues 139–143 (TVSGG), Asp-172, Gly-185, Asp-189, and Asn-280. Asp-308 is a binding site for Fe cation.

The protein belongs to the KAE1 / TsaD family. Requires Fe(2+) as cofactor.

The protein resides in the cytoplasm. It catalyses the reaction L-threonylcarbamoyladenylate + adenosine(37) in tRNA = N(6)-L-threonylcarbamoyladenosine(37) in tRNA + AMP + H(+). Functionally, required for the formation of a threonylcarbamoyl group on adenosine at position 37 (t(6)A37) in tRNAs that read codons beginning with adenine. Is involved in the transfer of the threonylcarbamoyl moiety of threonylcarbamoyl-AMP (TC-AMP) to the N6 group of A37, together with TsaE and TsaB. TsaD likely plays a direct catalytic role in this reaction. The chain is tRNA N6-adenosine threonylcarbamoyltransferase from Cytophaga hutchinsonii (strain ATCC 33406 / DSM 1761 / CIP 103989 / NBRC 15051 / NCIMB 9469 / D465).